The primary structure comprises 273 residues: Cbp/p300-interacting transactivator 2 (273 aa).

The segment at 137-204 is disordered; sequence DLHPAAGHQM…GSGGSGSSNM (68 aa). Over residues 165-200 the composition is skewed to gly residues; the sequence is STPGGSGGSSTPGGSGGSAGGGAGSSNSGGGSGGSG.

Belongs to the CITED family. As to quaternary structure, interacts (via C-terminus) with SMAD2. Interacts (via C-terminus) with SMAD3 (via MH2 domain). Interacts with LHX2 (via LIM domains). Interacts with WT1. Interacts (via C-terminus) with EP300 (via CH1 domain); the interaction is stimulated in response to hypoxia. Interacts with PPARA. Interacts (via C-terminus) with TFAP2A, TFAP2B and TFAP2C.

It is found in the nucleus. Its function is as follows. Transcriptional coactivator of the p300/CBP-mediated transcription complex. Acts as a bridge, linking TFAP2 transcription factors and the p300/CBP transcriptional coactivator complex in order to stimulate TFAP2-mediated transcriptional activation. Positively regulates TGF-beta signaling through its association with the SMAD/p300/CBP-mediated transcriptional coactivator complex. Stimulates the peroxisome proliferator-activated receptors PPARA transcriptional activity. Enhances estrogen-dependent transactivation mediated by estrogen receptors. Also acts as a transcriptional corepressor; interferes with the binding of the transcription factors HIF1A or STAT2 and the p300/CBP transcriptional coactivator complex. Participates in sex determination and early gonad development by stimulating transcription activation of SRY. Plays a role in controlling left-right patterning during embryogenesis; potentiates transcriptional activation of NODAL-mediated gene transcription in the left lateral plate mesoderm (LPM). Plays an essential role in differentiation of the adrenal cortex from the adrenogonadal primordium (AGP); stimulates WT1-mediated transcription activation thereby up-regulating the nuclear hormone receptor NR5A1 promoter activity. Associates with chromatin to the PITX2 P1 promoter region. This chain is Cbp/p300-interacting transactivator 2 (CITED2), found in Saguinus labiatus (Red-chested mustached tamarin).